A 238-amino-acid chain; its full sequence is MKDFNDIETIDFAETGCSFTREAIASGGYYQALKTPTCKEISGRRYKGTNTPDAVRDLWSTPREVIAYLEGRYGKYDLDAAASEENKVCEKFYSQETNCLKRWWGKNKHVWLNPPYSRPDIFVKKAIEQMEHNNQIDMLLPADNSTAWFTEARQNAAEIIWIEADLTEDIDGNEYARSGRLAFISGETGKAVDGNNKGSVIFIMRELKEGEVQQTHYIPITSICPSVKNKRAKVRKVD.

This sequence belongs to the N(4)/N(6)-methyltransferase family.

The enzyme catalyses a 2'-deoxyadenosine in DNA + S-adenosyl-L-methionine = an N(6)-methyl-2'-deoxyadenosine in DNA + S-adenosyl-L-homocysteine + H(+). Functionally, methyltransferase that methylates adenine residues in the dsDNA sequence 5'-GATC-3'. May prevent degradation of viral DNA by the host restriction-modification antiviral defense system. This is DNA N-6-adenine-methyltransferase from Escherichia phage T1 (Bacteriophage T1).